The sequence spans 95 residues: Class I hydrophobin 13 (95 aa).

4 cysteine pairs are disulfide-bonded: Cys14–Cys74, Cys21–Cys68, Cys22–Cys55, and Cys75–Cys88. Residues Asn23 and Asn77 are each glycosylated (N-linked (GlcNAc...) asparagine).

The protein belongs to the fungal hydrophobin family. In terms of assembly, self-assembles to form functional amyloid fibrils called rodlets. Self-assembly into fibrillar rodlets occurs spontaneously at hydrophobic:hydrophilic interfaces and the rodlets further associate laterally to form amphipathic monolayers.

It is found in the secreted. The protein resides in the cell wall. In terms of biological role, aerial growth, conidiation, and dispersal of filamentous fungi in the environment rely upon a capability of their secreting small amphipathic proteins called hydrophobins (HPBs) with low sequence identity. Class I can self-assemble into an outermost layer of rodlet bundles on aerial cell surfaces, conferring cellular hydrophobicity that supports fungal growth, development and dispersal; whereas Class II form highly ordered films at water-air interfaces through intermolecular interactions but contribute nothing to the rodlet structure. In Pleurotus ostreatus (strain PC15) (Oyster mushroom), this protein is Class I hydrophobin 13.